A 375-amino-acid polypeptide reads, in one-letter code: DNA replication and repair protein RecF (375 aa).

30-37 contributes to the ATP binding site; the sequence is GKNAQGKT.

Belongs to the RecF family.

It localises to the cytoplasm. Its function is as follows. The RecF protein is involved in DNA metabolism; it is required for DNA replication and normal SOS inducibility. RecF binds preferentially to single-stranded, linear DNA. It also seems to bind ATP. In Lactobacillus acidophilus (strain ATCC 700396 / NCK56 / N2 / NCFM), this protein is DNA replication and repair protein RecF.